The following is a 327-amino-acid chain: Malate dehydrogenase (327 aa).

12–18 (GAAGQIC) is an NAD(+) binding site. Substrate contacts are provided by arginine 92 and arginine 98. Residues asparagine 105, glutamine 112, and 129–131 (TGN) each bind NAD(+). Substrate is bound by residues asparagine 131 and arginine 162. The active-site Proton acceptor is histidine 187.

This sequence belongs to the LDH/MDH superfamily. MDH type 2 family.

It carries out the reaction (S)-malate + NAD(+) = oxaloacetate + NADH + H(+). Its function is as follows. Catalyzes the reversible oxidation of malate to oxaloacetate. The sequence is that of Malate dehydrogenase from Cutibacterium acnes (strain DSM 16379 / KPA171202) (Propionibacterium acnes).